Reading from the N-terminus, the 54-residue chain is UPF0235 protein in proC 3'region (54 aa).

It belongs to the UPF0235 family.

The chain is UPF0235 protein in proC 3'region from Vibrio alginolyticus.